The sequence spans 251 residues: Ubiquinone/menaquinone biosynthesis C-methyltransferase UbiE (251 aa).

Residues Thr74, Asp95, 123–124 (NA), and Ser140 each bind S-adenosyl-L-methionine.

The protein belongs to the class I-like SAM-binding methyltransferase superfamily. MenG/UbiE family.

It carries out the reaction a 2-demethylmenaquinol + S-adenosyl-L-methionine = a menaquinol + S-adenosyl-L-homocysteine + H(+). The enzyme catalyses a 2-methoxy-6-(all-trans-polyprenyl)benzene-1,4-diol + S-adenosyl-L-methionine = a 5-methoxy-2-methyl-3-(all-trans-polyprenyl)benzene-1,4-diol + S-adenosyl-L-homocysteine + H(+). Its pathway is quinol/quinone metabolism; menaquinone biosynthesis; menaquinol from 1,4-dihydroxy-2-naphthoate: step 2/2. It participates in cofactor biosynthesis; ubiquinone biosynthesis. Its function is as follows. Methyltransferase required for the conversion of demethylmenaquinol (DMKH2) to menaquinol (MKH2) and the conversion of 2-polyprenyl-6-methoxy-1,4-benzoquinol (DDMQH2) to 2-polyprenyl-3-methyl-6-methoxy-1,4-benzoquinol (DMQH2). In Salmonella arizonae (strain ATCC BAA-731 / CDC346-86 / RSK2980), this protein is Ubiquinone/menaquinone biosynthesis C-methyltransferase UbiE.